We begin with the raw amino-acid sequence, 113 residues long: MADVEDGEETCALASHSGSSGSKSGGDKMFSLKKWNAVAMWSWDVECDTCAICRVQVMDACLRCQAENKQEDCVVVWGECNHSFHNCCMSLWVKQNNRCPLCQQDWVVQRIGK.

The interval Met-1–Gly-26 is disordered. Ala-2 is modified (N-acetylalanine). Thr-10 carries the phosphothreonine; by CK2 modification. Positions 50, 53, 61, 64, 73, 80, 82, 85, 87, 88, 99, and 102 each coordinate Zn(2+). An RING-type zinc finger spans residues Cys-61–Gln-103.

It belongs to the RING-box family. As to quaternary structure, catalytic component of multiple cullin-5-RING E3 ubiquitin-protein ligase complexes (ECS complexes, also named CRL5 complexes) composed of CUL5, Elongin BC (ELOB and ELOC), RNF7/RBX2 and a variable SOCS box domain-containing protein as substrate-specific recognition component. Also interacts (with lower preference) with CUL1, CUL2, CUL3, CUL4A and CUL4B; additional evidence is however required to confirm this result in vivo. Interacts with UBE2F. Interacts with CSNK2B, the interaction is not affected by phosphorylation by CK2. May also interact with DCUN1D1, DCUN1D2, DCUN1D3, DCUN1D4 and DCUN1D5. (Microbial infection) Following infection by HIV-1 virus, component of a cullin-5-RING E3 ubiquitin-protein ligase complex (ECS complex) hijacked by the HIV-1 Vif protein. In terms of processing, phosphorylation at Thr-10 by CK2 promotes its degradation by the proteasome. Expressed in heart, liver, skeletal muscle and pancreas. At very low levels expressed in brain, placenta and lung.

The protein localises to the cytoplasm. Its subcellular location is the nucleus. The enzyme catalyses S-ubiquitinyl-[E2 ubiquitin-conjugating enzyme]-L-cysteine + [acceptor protein]-L-lysine = [E2 ubiquitin-conjugating enzyme]-L-cysteine + N(6)-ubiquitinyl-[acceptor protein]-L-lysine.. It catalyses the reaction S-[NEDD8-protein]-yl-[E2 NEDD8-conjugating enzyme]-L-cysteine + [cullin]-L-lysine = [E2 NEDD8-conjugating enzyme]-L-cysteine + N(6)-[NEDD8-protein]-yl-[cullin]-L-lysine.. It participates in protein modification; protein ubiquitination. Its pathway is protein modification; protein neddylation. Functionally, catalytic component of multiple cullin-5-RING E3 ubiquitin-protein ligase complexes (ECS complexes), which mediate the ubiquitination and subsequent proteasomal degradation of target proteins. It is thereby involved in various biological processes, such as cell cycle progression, signal transduction and transcription. The functional specificity of the E3 ubiquitin-protein ligase ECS complexes depend on the variable SOCS box-containing substrate recognition component. Within ECS complexes, RNF7/RBX2 recruits the E2 ubiquitination enzyme to the complex via its RING-type and brings it into close proximity to the substrate. Catalytic subunit of various SOCS-containing ECS complexes, such as the ECS(SOCS7) complex, that regulate reelin signaling by mediating ubiquitination and degradation of DAB1. The ECS(SOCS2) complex mediates the ubiquitination and subsequent proteasomal degradation of phosphorylated EPOR and GHR. Promotes ubiquitination and degradation of NF1, thereby regulating Ras protein signal transduction. As part of the ECS(ASB9) complex, catalyzes ubiquitination and degradation of CKB. The ECS(SPSB3) complex catalyzes ubiquitination of nuclear CGAS. As part of the ECS(RAB40C) complex, mediates ANKRD28 ubiquitination and degradation, thereby inhibiting protein phosphatase 6 (PP6) complex activity and focal adhesion assembly during cell migration. As part of some ECS complex, catalyzes 'Lys-11'-linked ubiquitination and degradation of BTRC. ECS complexes and ARIH2 collaborate in tandem to mediate ubiquitination of target proteins; ARIH2 mediating addition of the first ubiquitin on CRLs targets. Specifically catalyzes the neddylation of CUL5 via its interaction with UBE2F. Does not catalyze neddylation of other cullins (CUL1, CUL2, CUL3, CUL4A or CUL4B). May play a role in protecting cells from apoptosis induced by redox agents. In terms of biological role, inactive. (Microbial infection) Following infection by HIV-1 virus, catalytic component of a cullin-5-RING E3 ubiquitin-protein ligase complex (ECS complex) hijacked by the HIV-1 Vif protein, which catalyzes ubiquitination and degradation of APOBEC3F and APOBEC3G. This chain is RING-box protein 2, found in Homo sapiens (Human).